The following is a 704-amino-acid chain: Elongation factor G (704 aa).

The tr-type G domain occupies 6 to 282 (NKVRNIGIMA…AVIDYLPTPL (277 aa)). GTP is bound by residues 15–22 (AHIDAGKT), 79–83 (DTPGH), and 133–136 (NKMD).

This sequence belongs to the TRAFAC class translation factor GTPase superfamily. Classic translation factor GTPase family. EF-G/EF-2 subfamily.

Its subcellular location is the cytoplasm. Catalyzes the GTP-dependent ribosomal translocation step during translation elongation. During this step, the ribosome changes from the pre-translocational (PRE) to the post-translocational (POST) state as the newly formed A-site-bound peptidyl-tRNA and P-site-bound deacylated tRNA move to the P and E sites, respectively. Catalyzes the coordinated movement of the two tRNA molecules, the mRNA and conformational changes in the ribosome. This chain is Elongation factor G, found in Corynebacterium diphtheriae (strain ATCC 700971 / NCTC 13129 / Biotype gravis).